A 1151-amino-acid polypeptide reads, in one-letter code: Semaphorin-5B (1151 aa).

Residues 1-1036 (MPCGFSPSPV…TDCAGFNLIH (1036 aa)) are Extracellular-facing. A Sema domain is found at 103 to 553 (HPTVAFEDLQ…LRDGVLRVPL (451 aa)). Asn-153 carries an N-linked (GlcNAc...) asparagine glycan. 2 disulfides stabilise this stretch: Cys-172-Cys-182 and Cys-199-Cys-208. Asn-236 and Asn-345 each carry an N-linked (GlcNAc...) asparagine glycan. 2 disulfide bridges follow: Cys-322-Cys-425 and Cys-346-Cys-388. A glycan (N-linked (GlcNAc...) asparagine) is linked at Asn-436. The region spanning 555–602 (RCAAYRSQGACLGARDPYCGWDGKQQRCSTLEDSSNMSLWTQNITACP) is the PSI domain. 2 consecutive TSP type-1 domains span residues 664-720 (NGAW…TPCP) and 722-771 (PIFW…EGCP). Disulfide bonds link Cys-676–Cys-713, Cys-680–Cys-719, Cys-691–Cys-703, Cys-734–Cys-765, Cys-738–Cys-770, and Cys-749–Cys-755. Thr-788 is a glycosylation site (O-linked (GalNAc...) threonine). 3 TSP type-1 domains span residues 853 to 908 (SGGW…QACP), 910 to 965 (RGAW…QACP), and 966 to 1010 (EGWS…RPCP). Intrachain disulfides connect Cys-865–Cys-902, Cys-869–Cys-907, Cys-880–Cys-892, Cys-922–Cys-959, Cys-926–Cys-964, and Cys-937–Cys-949. The helical; Signal-anchor for type III membrane protein transmembrane segment at 1037–1057 (LVATGISCFLGSGLLTLAVYL) threads the bilayer. The Cytoplasmic portion of the chain corresponds to 1058-1151 (SCQHCQRQSQ…SPGQRCFPNS (94 aa)).

It belongs to the semaphorin family.

The protein localises to the membrane. Functionally, may act as a positive axonal guidance cue. The protein is Semaphorin-5B (SEMA5B) of Homo sapiens (Human).